The chain runs to 334 residues: Ornithine carbamoyltransferase (334 aa).

Residues 57–60 (STRT), Gln-84, Arg-108, and 135–138 (HPTQ) each bind carbamoyl phosphate. L-ornithine-binding positions include Asn-169, Asp-233, and 237-238 (SM). Residues 275 to 276 (CL) and Arg-320 each bind carbamoyl phosphate.

Belongs to the aspartate/ornithine carbamoyltransferase superfamily. OTCase family. In terms of assembly, homotrimer.

The protein resides in the cytoplasm. It catalyses the reaction carbamoyl phosphate + L-ornithine = L-citrulline + phosphate + H(+). The protein operates within amino-acid biosynthesis; L-arginine biosynthesis; L-arginine from L-ornithine and carbamoyl phosphate: step 1/3. Functionally, reversibly catalyzes the transfer of the carbamoyl group from carbamoyl phosphate (CP) to the N(epsilon) atom of ornithine (ORN) to produce L-citrulline. This is Ornithine carbamoyltransferase from Vibrio vulnificus (strain CMCP6).